The following is a 179-amino-acid chain: CDP-archaeol synthase (179 aa).

The next 4 membrane-spanning stretches (helical) occupy residues 53-73 (FVGG…IEKL), 88-108 (FTLT…GSFI), 120-140 (FLIV…SLYP), and 145-165 (LFTA…HMGI).

The protein belongs to the CDP-archaeol synthase family. The cofactor is Mg(2+).

The protein localises to the cell membrane. It carries out the reaction 2,3-bis-O-(geranylgeranyl)-sn-glycerol 1-phosphate + CTP + H(+) = CDP-2,3-bis-O-(geranylgeranyl)-sn-glycerol + diphosphate. It functions in the pathway membrane lipid metabolism; glycerophospholipid metabolism. In terms of biological role, catalyzes the formation of CDP-2,3-bis-(O-geranylgeranyl)-sn-glycerol (CDP-archaeol) from 2,3-bis-(O-geranylgeranyl)-sn-glycerol 1-phosphate (DGGGP) and CTP. This reaction is the third ether-bond-formation step in the biosynthesis of archaeal membrane lipids. Can use CTP or dCTP, but not ATP, GTP or TTP. This Archaeoglobus fulgidus (strain ATCC 49558 / DSM 4304 / JCM 9628 / NBRC 100126 / VC-16) protein is CDP-archaeol synthase.